The sequence spans 491 residues: 4,4'-diapolycopen-4-al dehydrogenase (491 aa).

The active site involves Glu208.

The protein belongs to the carotenoid/retinoid oxidoreductase family. CrtN subfamily.

The catalysed reaction is all-trans-4,4'-diapolycopen-4-al + A + H2O = all-trans-4,4'-diapolycopen-4-oate + AH2 + H(+). Its pathway is carotenoid biosynthesis. Involved in the biosynthesis of the major C30 carotenoid methyl 4'-[6-O-(acylglycosyl)oxy]-4,4'-diapolycopen-4-oic acid via 4,4'-diapolycopen-4-oic acid intermediate. Catalyzes the oxidation of 4,4'-diapolycopen-4-al to yield 4,4'-diapolycopen-4-oic acid. This chain is 4,4'-diapolycopen-4-al dehydrogenase, found in Metabacillus indicus (Bacillus indicus).